Consider the following 113-residue polypeptide: UPF0482 protein YnfB (113 aa).

The first 28 residues, 1 to 28 (MKITLSKRIGLLAFLLPCALALSTTVHA), serve as a signal peptide directing secretion.

Belongs to the UPF0482 family.

In Shigella dysenteriae serotype 1 (strain Sd197), this protein is UPF0482 protein YnfB.